Reading from the N-terminus, the 404-residue chain is MQDGSVTTPFGRRSMTLGMLASQYMSRELEPETSADKWKLFRALCEAKPKLGISERALSVMNALLSFYPETTLSEENGLIVFPSNMQLSLRAHGMAEATLRRHIAALVDAGLLARRDSPNGKRYARKDGDGSIDEAYGFSLAPLLSRAREIEQIAAYVKIERLQLRRLRERLTICRRDIGKLIEVAIEEGVDGNWDGIHQHYRSLVATIPRVATAATVAPILEEMEMLREEISNLLEIRLKIENLSGNPDQIERHKQNSHPESTNEFEPSSREEQGERPSPAIEPQREPMKVFPLGMVLRACPSISDYGPGGVVASPRDLMQAAVVVRSMLCVSPSAYQDACEVMGPENASAVMACILERSGHIKSPGGYLRDLTSRAKRGEFSPGPVLMALLRARGGSDRLAS.

The tract at residues 249 to 287 is disordered; the sequence is PDQIERHKQNSHPESTNEFEPSSREEQGERPSPAIEPQR.

The protein to A.rhizogenes possible replication protein C (RepC).

This Sinorhizobium fredii (strain NBRC 101917 / NGR234) protein is Putative replication protein C.